The chain runs to 289 residues: ATP synthase subunit a (289 aa).

Transmembrane regions (helical) follow at residues 41–61 (KATA…WLGF), 101–121 (YLLV…IPAA), 129–149 (IAVP…AGIK), 166–186 (TAPL…TLIV), 189–209 (FTLA…LLVF), 222–242 (FVFG…ELVI), and 244–264 (ALQA…AMAH).

It belongs to the ATPase A chain family. As to quaternary structure, F-type ATPases have 2 components, CF(1) - the catalytic core - and CF(0) - the membrane proton channel. CF(1) has five subunits: alpha(3), beta(3), gamma(1), delta(1), epsilon(1). CF(0) has three main subunits: a(1), b(2) and c(9-12). The alpha and beta chains form an alternating ring which encloses part of the gamma chain. CF(1) is attached to CF(0) by a central stalk formed by the gamma and epsilon chains, while a peripheral stalk is formed by the delta and b chains.

Its subcellular location is the cell membrane. Its function is as follows. Key component of the proton channel; it plays a direct role in the translocation of protons across the membrane. The sequence is that of ATP synthase subunit a from Frankia alni (strain DSM 45986 / CECT 9034 / ACN14a).